The sequence spans 593 residues: Aspartate--tRNA ligase (593 aa).

L-aspartate is bound at residue Glu173. The interval 197–200 (QLFK) is aspartate. Residue Arg219 participates in L-aspartate binding. ATP is bound by residues 219–221 (RDE) and Gln228. His449 is a binding site for L-aspartate. Glu483 lines the ATP pocket. Arg490 provides a ligand contact to L-aspartate. 535-538 (GLDR) is an ATP binding site.

Belongs to the class-II aminoacyl-tRNA synthetase family. Type 1 subfamily. Homodimer.

The protein localises to the cytoplasm. It carries out the reaction tRNA(Asp) + L-aspartate + ATP = L-aspartyl-tRNA(Asp) + AMP + diphosphate. Functionally, catalyzes the attachment of L-aspartate to tRNA(Asp) in a two-step reaction: L-aspartate is first activated by ATP to form Asp-AMP and then transferred to the acceptor end of tRNA(Asp). This is Aspartate--tRNA ligase from Shewanella piezotolerans (strain WP3 / JCM 13877).